Reading from the N-terminus, the 677-residue chain is Probable potassium transport system protein Kup (677 aa).

A run of 12 helical transmembrane segments spans residues 13–33, 54–74, 98–118, 137–157, 171–191, 217–237, 249–269, 296–316, 345–365, 374–394, 402–422, and 429–449; these read GALIAIGIVFGDIGTSPLYTM, VSLVFWTLMLITTIKYVIIAL, WLLLPALIGGAALLADGTLTP, FIFPNNQTIVLFVVTVILLIV, IFGPVMLTWFLFIGFFGLVNI, TGIFILGSVFLATTGAEALYS, VSWIFVYTMLILNYMGQGAWI, IFGVVMAALAAIIASQALISG, MYIGTVNWLLCIIGLIIVWAF, AYGLSITITMLMTTLLLYQFI, ILAFFFVVIFGMIETVFLIAS, and GGYATLIIMVAILSVMMIWFY.

It belongs to the HAK/KUP transporter (TC 2.A.72) family.

The protein resides in the cell membrane. The enzyme catalyses K(+)(in) + H(+)(in) = K(+)(out) + H(+)(out). Its function is as follows. Transport of potassium into the cell. Likely operates as a K(+):H(+) symporter. The chain is Probable potassium transport system protein Kup from Leuconostoc mesenteroides subsp. mesenteroides (strain ATCC 8293 / DSM 20343 / BCRC 11652 / CCM 1803 / JCM 6124 / NCDO 523 / NBRC 100496 / NCIMB 8023 / NCTC 12954 / NRRL B-1118 / 37Y).